Here is a 594-residue protein sequence, read N- to C-terminus: Potassium-transporting ATPase potassium-binding subunit (594 aa).

10 helical membrane passes run 3-23, 67-87, 136-156, 179-199, 287-307, 314-334, 415-435, 453-473, 519-539, and 562-582; these read ADFL…APLL, AVAM…LQRL, ALTV…IALV, LYVL…QGVV, LEML…GEMV, VAIL…AAYF, GLYG…LMIG, VALV…VAVL, VLLG…ILAL, and LFVA…YVPA.

Belongs to the KdpA family. As to quaternary structure, the system is composed of three essential subunits: KdpA, KdpB and KdpC.

Its subcellular location is the cell inner membrane. In terms of biological role, part of the high-affinity ATP-driven potassium transport (or Kdp) system, which catalyzes the hydrolysis of ATP coupled with the electrogenic transport of potassium into the cytoplasm. This subunit binds the periplasmic potassium ions and delivers the ions to the membrane domain of KdpB through an intramembrane tunnel. The sequence is that of Potassium-transporting ATPase potassium-binding subunit from Bordetella parapertussis (strain 12822 / ATCC BAA-587 / NCTC 13253).